The chain runs to 442 residues: Protein PHYTOCHROME KINASE SUBSTRATE 2 (442 aa).

A disordered region spans residues 110 to 130; it reads IFVGPKQSSKNSSETPSLRSE. The segment covering 121 to 130 has biased composition (low complexity); sequence SSETPSLRSE. 2 positions are modified to phosphoserine: Ser-239 and Ser-245. A disordered region spans residues 394-442; that stretch reads VSGDSYTSMNRTPSYVPRFPVEANPTSTETRRRISSSSVSHTQSPFLYT. Polar residues predominate over residues 397 to 406; the sequence is DSYTSMNRTP. A compositionally biased stretch (low complexity) spans 428 to 442; sequence SSSSVSHTQSPFLYT.

The protein belongs to the PKS family. As to quaternary structure, interacts with PKS1, RPT3, PHOT1 and PHOT2. In terms of tissue distribution, expressed in leaves, with the strongest expression on edges of the laminas. Not found in roots.

It is found in the cell membrane. Acts predominantly in the phot1 pathway. Involved in the leaf positioning and also in the phot2 pathway controlling the leaf flattening. Component of the network that modulates the very low-fluence response (VLFR) branch of phyA signaling. Regulates phytochrome-mediated photomorphogenesis and hypocotyl phototropism. May act by controlling auxin homeostasis. The polypeptide is Protein PHYTOCHROME KINASE SUBSTRATE 2 (PKS2) (Arabidopsis thaliana (Mouse-ear cress)).